The primary structure comprises 171 residues: Co-chaperone protein HscB (171 aa).

The J domain occupies 2–74 (DYFTLFGLPA…LTRAEYLLSL (73 aa)).

This sequence belongs to the HscB family. Interacts with HscA and stimulates its ATPase activity. Interacts with IscU.

In terms of biological role, co-chaperone involved in the maturation of iron-sulfur cluster-containing proteins. Seems to help targeting proteins to be folded toward HscA. This Salmonella arizonae (strain ATCC BAA-731 / CDC346-86 / RSK2980) protein is Co-chaperone protein HscB.